Here is a 409-residue protein sequence, read N- to C-terminus: Protein PHOSPHATE STARVATION RESPONSE 1 (409 aa).

Residues 1–15 (MEARPVHRSGSRDLT) show a composition bias toward basic and acidic residues. 3 disordered regions span residues 1–42 (MEAR…NSQL), 86–108 (EKQQ…NNDS), and 178–226 (ETNS…TGKA). Composition is skewed to polar residues over residues 16-26 (RTSSIPSTQKP) and 90-108 (HYTG…NNDS). A compositionally biased stretch (low complexity) spans 192-224 (QIPQPQIVQQQPSPSVELRPVSTTSSNSNNGTG). The HTH myb-type domain occupies 222 to 282 (GTGKARMRWT…HLQKYRTARY (61 aa)). Positions 253 to 278 (PKGVLKIMKVEGLTIYHVKSHLQKYR) form a DNA-binding region, H-T-H motif. Residues 314–334 (TEALRLQMEVQKQLHEQLEIQ) adopt a coiled-coil conformation. Residues 327–332 (LHEQLE) carry the LHEQLE motif. A compositionally biased stretch (polar residues) spans 358–370 (GLTKGTASTSDSA). The segment at 358 to 409 (GLTKGTASTSDSAAKSEQEDKKTADSKEVPEEETRKCEELESPQPKRPKIDN) is disordered. The span at 371–396 (AKSEQEDKKTADSKEVPEEETRKCEE) shows a compositional bias: basic and acidic residues. The residue at position 399 (Ser399) is a Phosphoserine.

This sequence belongs to the MYB-CC family. In terms of assembly, homodimers and heterodimers. Interacts with SPX1 in a Pi-dependent manner. Does not interact with PHL2 or PHL3. Post-translationally, sumoylated by SIZ1. Sumoylation controls phosphate deficiency responses.

It localises to the nucleus. In terms of biological role, transcription factor involved in phosphate starvation signaling. Binds as a dimer to P1BS, an imperfect palindromic sequence 5'-GNATATNC-3', to promote the expression of inorganic phosphate (Pi) starvation-responsive genes. SPX1 is a competitive inhibitor of this DNA-binding. PHR1 binding to its targets is low Pi-dependent. Regulates the expression of miR399. Regulates the expression of IPS1 (At3g09922), a non-coding RNA that mimics the target of miR399 to block the cleavage of PHO2 under Pi-deficient conditions. Regulates lipid remodeling and triacylglycerol accumulation during phosphorus starvation. Required for the shoot-specific hypoxic response. Regulates FER1 expression upon phosphate starvation, linking iron and phosphate homeostasis. Contributes to the homeostasis of both sulfate and phosphate in plants under phosphate deficiency. Required for adaptation to high light and retaining functional photosynthesis during phosphate starvation. Involved in the coregulation of Zn and Pi homeostasis. This chain is Protein PHOSPHATE STARVATION RESPONSE 1, found in Arabidopsis thaliana (Mouse-ear cress).